We begin with the raw amino-acid sequence, 276 residues long: Probable NADH-ubiquinone oxidoreductase 30.4 kDa subunit, mitochondrial (276 aa).

The disordered stretch occupies residues 248 to 276; the sequence is EPVGEGKDFTPESFKLPTPQPEPEQEEKK.

This sequence belongs to the complex I 30 kDa subunit family. Complex I is composed of about 30 different subunits. This is a component of the iron-sulfur protein fraction.

It localises to the mitochondrion inner membrane. The catalysed reaction is a ubiquinone + NADH + 5 H(+)(in) = a ubiquinol + NAD(+) + 4 H(+)(out). Its function is as follows. Core subunit of the mitochondrial membrane respiratory chain NADH dehydrogenase (Complex I) that is believed to belong to the minimal assembly required for catalysis. Complex I functions in the transfer of electrons from NADH to the respiratory chain. The immediate electron acceptor for the enzyme is believed to be ubiquinone. Essential for N-alkane assimilation. This is Probable NADH-ubiquinone oxidoreductase 30.4 kDa subunit, mitochondrial (ALI1) from Candida maltosa (Yeast).